The chain runs to 389 residues: Alkanesulfonate monooxygenase (389 aa).

The protein belongs to the SsuD family.

The enzyme catalyses an alkanesulfonate + FMNH2 + O2 = an aldehyde + FMN + sulfite + H2O + 2 H(+). In terms of biological role, catalyzes the desulfonation of aliphatic sulfonates. This chain is Alkanesulfonate monooxygenase, found in Variovorax paradoxus (strain S110).